A 353-amino-acid polypeptide reads, in one-letter code: Photosystem II D2 protein (353 aa).

The residue at position 2 (threonine 2) is an N-acetylthreonine. The residue at position 2 (threonine 2) is a Phosphothreonine. The chain crosses the membrane as a helical span at residues 41-61 (CAYFALGGWFTGTTFVTSWYT). Residue histidine 118 coordinates chlorophyll a. A helical transmembrane segment spans residues 125–141 (GFMLRQFELARSVQLRP). Pheophytin a is bound by residues glutamine 130 and asparagine 143. Residues 153–166 (VFVSVFLIYPLGQS) traverse the membrane as a helical segment. Histidine 198 is a binding site for chlorophyll a. A helical membrane pass occupies residues 208–228 (AALLCAIHGATVENTLFEDGD). A plastoquinone is bound by residues histidine 215 and phenylalanine 262. Residue histidine 215 coordinates Fe cation. Histidine 269 provides a ligand contact to Fe cation. Residues 279–295 (GLWMSALGVVGLALNLR) form a helical membrane-spanning segment.

Belongs to the reaction center PufL/M/PsbA/D family. As to quaternary structure, PSII is composed of 1 copy each of membrane proteins PsbA, PsbB, PsbC, PsbD, PsbE, PsbF, PsbH, PsbI, PsbJ, PsbK, PsbL, PsbM, PsbT, PsbX, PsbY, PsbZ, Psb30/Ycf12, at least 3 peripheral proteins of the oxygen-evolving complex and a large number of cofactors. It forms dimeric complexes. The D1/D2 heterodimer binds P680, chlorophylls that are the primary electron donor of PSII, and subsequent electron acceptors. It shares a non-heme iron and each subunit binds pheophytin, quinone, additional chlorophylls, carotenoids and lipids. There is also a Cl(-1) ion associated with D1 and D2, which is required for oxygen evolution. The PSII complex binds additional chlorophylls, carotenoids and specific lipids. serves as cofactor.

The protein resides in the plastid. It is found in the chloroplast thylakoid membrane. It carries out the reaction 2 a plastoquinone + 4 hnu + 2 H2O = 2 a plastoquinol + O2. In terms of biological role, photosystem II (PSII) is a light-driven water:plastoquinone oxidoreductase that uses light energy to abstract electrons from H(2)O, generating O(2) and a proton gradient subsequently used for ATP formation. It consists of a core antenna complex that captures photons, and an electron transfer chain that converts photonic excitation into a charge separation. The D1/D2 (PsbA/PsbD) reaction center heterodimer binds P680, the primary electron donor of PSII as well as several subsequent electron acceptors. D2 is needed for assembly of a stable PSII complex. The protein is Photosystem II D2 protein of Phaseolus vulgaris (Kidney bean).